Consider the following 355-residue polypeptide: Daphnetin O-methyltransferase 1 (355 aa).

Residues D222, D242, and K256 each contribute to the S-adenosyl-L-homocysteine site. H260 (proton acceptor) is an active-site residue.

It belongs to the class I-like SAM-binding methyltransferase superfamily. Cation-independent O-methyltransferase family. COMT subfamily.

It catalyses the reaction 7,8-dihydroxycoumarin + S-adenosyl-L-methionine = 7-hydroxy-8-methoxycoumarin + S-adenosyl-L-homocysteine + H(+). The protein operates within aromatic compound metabolism. Its pathway is secondary metabolite biosynthesis. Functionally, O-methyltransferase involved in the biosynthesis of coumarins natural products such as daphnetin derivatives. Catalyzes specifically the methylation of daphnetin (7,8-dihydroxycoumarin) to produce hydrangetin (7-hydroxy-8-methoxycoumarin). Probably involved in acclimation to low temperature conditions. This is Daphnetin O-methyltransferase 1 from Secale cereale (Rye).